The following is an 81-amino-acid chain: Weak neurotoxin OH-72 (81 aa).

The first 16 residues, 1–16 (LTLVVVTIVCLDLGYT), serve as a signal peptide directing secretion. 5 disulfide bridges follow: cysteine 19–cysteine 40, cysteine 22–cysteine 27, cysteine 33–cysteine 58, cysteine 62–cysteine 73, and cysteine 74–cysteine 79.

The protein belongs to the three-finger toxin family. Ancestral subfamily. Orphan group II sub-subfamily. As to expression, expressed by the venom gland.

It localises to the secreted. In terms of biological role, binds with low affinity to muscular (alpha-1-beta-1-delta-epsilon/CHRNA1-CHRNB1-CHRND-CHRNE) and very low affinity to neuronal (alpha-7/CHRNA7) nicotinic acetylcholine receptor (nAChR). This is Weak neurotoxin OH-72 from Ophiophagus hannah (King cobra).